The chain runs to 183 residues: MREYKVVVLGSGGVGKSALTVQFVTGTFIEKYDPTIEDFYRKEIEVDSSPSVLEILDTAGTEQFASMRDLYIKNGQGFILVYSLVNQQSFQDIKPMRDQIIRVKRYEKVPVILVGNKVDLESEREVSSSEGRALAEEWGCPFMETSAKSKTMVDELFAEIVRQMNYAAQPDKDDPCCSACNIQ.

10–17 serves as a coordination point for GTP; it reads GSGGVGKS. Positions 32–40 match the Effector region motif; the sequence is YDPTIEDFY. Thr-35 is a glycosylation site ((Microbial infection) O-linked (Glc) threonine; by C.difficile toxin TcdA, and by P.sordellii toxin TcsL). Residues 57 to 61 and 116 to 119 contribute to the GTP site; these read DTAGT and NKVD. 2 S-palmitoyl cysteine lipidation sites follow: Cys-176 and Cys-177. Position 180 is a cysteine methyl ester (Cys-180). Residue Cys-180 is the site of S-farnesyl cysteine attachment. Residues 181–183 constitute a propeptide, removed in mature form; it reads NIQ.

It belongs to the small GTPase superfamily. Ras family. As to quaternary structure, interacts (GTP-bound form) with RUNDC3A. Interacts with RGS14; the interaction is GTP-dependent. Interacts with PLCE1. Interacts with ARHGAP29, SGSM1, SGSM2 and SGSM3. Interacts (GTP-bound form preferentially) with TNIK (via the CNH domain); the interaction is direct and recruits RAP2A to the E3 ubiquitin ligase NEDD4. Interacts with MINK1. Interacts (GTP-bound form preferentially) with MAP4K4. Interacts with cytoskeletal actin. In terms of processing, ubiquitinated; undergoes 'Lys-63' monoubiquitination and diubiquitination by NEDD4. Multiple lysine residues are probably modified. Ubiquitination requires TNIK, prevents interaction with effectors and inactivates RAP2A. Ubiquitination by the ECS(RAB40B) complex leads to RAP2A localization to lamellipodia plasma membrane, activation, and regulation of sorting at early endosomes for recycling to the lamellipodia plasma membrane. Palmitoylated. Palmitoylation is required for association with recycling endosome membranes and activation of TNIK. Post-translationally, (Microbial infection) Glucosylated at Thr-35 by C.difficile toxin TcdA in the colonic epithelium, and by P.sordellii toxin TcsL in the vascular endothelium.

The protein resides in the midbody. It is found in the cell projection. The protein localises to the lamellipodium membrane. It localises to the golgi apparatus. Its subcellular location is the recycling endosome membrane. The protein resides in the lysosome. It catalyses the reaction GTP + H2O = GDP + phosphate + H(+). With respect to regulation, activated by the guanine nucleotide-exchange factors RAPGEF3 and RAPGEF4 in a cAMP-dependent manner. Nucleotide exchange is also specifically stimulated by RAPGEF5, RASGEF1A and RASGEF1B. In terms of biological role, small GTP-binding protein which cycles between a GDP-bound inactive and a GTP-bound active form. In its active form interacts with and regulates several effectors including MAP4K4, MINK1 and TNIK. Part of a signaling complex composed of NEDD4, RAP2A and TNIK which regulates neuronal dendrite extension and arborization during development. More generally, it is part of several signaling cascades and regulates cytoskeletal rearrangements, cell migration, cell adhesion and cell spreading. The chain is Ras-related protein Rap-2a from Homo sapiens (Human).